We begin with the raw amino-acid sequence, 362 residues long: 3-dehydroquinate synthase (362 aa).

NAD(+) is bound by residues 70–75 (DGEQYK), 104–108 (GVIGD), 128–129 (TT), K141, and K150. Residues E183, H246, and H263 each contribute to the Zn(2+) site.

It belongs to the sugar phosphate cyclases superfamily. Dehydroquinate synthase family. NAD(+) is required as a cofactor. Co(2+) serves as cofactor. The cofactor is Zn(2+).

It is found in the cytoplasm. It carries out the reaction 7-phospho-2-dehydro-3-deoxy-D-arabino-heptonate = 3-dehydroquinate + phosphate. The protein operates within metabolic intermediate biosynthesis; chorismate biosynthesis; chorismate from D-erythrose 4-phosphate and phosphoenolpyruvate: step 2/7. Catalyzes the conversion of 3-deoxy-D-arabino-heptulosonate 7-phosphate (DAHP) to dehydroquinate (DHQ). The protein is 3-dehydroquinate synthase of Pasteurella multocida (strain Pm70).